The following is a 398-amino-acid chain: uncharacterized protein (398 aa).

K212 carries the post-translational modification N6-(pyridoxal phosphate)lysine.

It belongs to the trans-sulfuration enzymes family. Pyridoxal 5'-phosphate serves as cofactor.

This is an uncharacterized protein from Schizosaccharomyces pombe (strain 972 / ATCC 24843) (Fission yeast).